We begin with the raw amino-acid sequence, 1700 residues long: Leucine-rich repeat-containing protein 37A2 (1700 aa).

The first 35 residues, 1–35 (MSSAQCPALVCVMSRLRFWGPWPLLMWQLLWLLVK), serve as a signal peptide directing secretion. Topologically, residues 36 to 1582 (EAQPLEWVKD…VPGYGYTDKL (1547 aa)) are extracellular. Over residues 54–65 (LGPPDSWSSHSS) the composition is skewed to polar residues. Disordered regions lie at residues 54–104 (LGPP…ESTE), 130–156 (QQDLKDKLSPQERLPVSPKKLKKDPAQ), 169–534 (QLST…AQPP), 559–580 (TEVELSPTMKETPTQPPKKVVP), 619–642 (PEPTTEVGHSTPPKRTIVSPKHPE), and 729–752 (TKPTTEVKPSPTTEETSTQPPDLG). One copy of the LRR 1 repeat lies at 137 to 160 (LSPQERLPVSPKKLKKDPAQRWSL). Composition is skewed to polar residues over residues 169–189 (QLSTPQSQKQTLQNEYSSTDT) and 223–237 (ETQNPETLEDIQSSS). LRR repeat units follow at residues 230-253 (LEDIQSSSLQQEAPAQLPQLLEEE) and 267-290 (ESSMESLTLPNHEVSVQPPGEDQA). Residues 238-249 (LQQEAPAQLPQL) are compositionally biased toward low complexity. N-linked (GlcNAc...) asparagine glycosylation occurs at N296. Polar residues predominate over residues 307 to 326 (TITSEPTNETESSQAQQETP). Positions 358 to 368 (SEQQQPVQPSE) are enriched in low complexity. Polar residues predominate over residues 433 to 446 (LVHQEATTRLSGSG). The segment covering 482-493 (SPEPINNENPSP) has biased composition (low complexity). The span at 729–749 (TKPTTEVKPSPTTEETSTQPP) shows a compositional bias: low complexity. LRR repeat units follow at residues 864 to 887 (NGTFTILNFQGNYISYIDGNVWKA), 888 to 911 (YSWTEKLILRENNLTELHKDSFEG), 912 to 935 (LLSLQYLDLSCNKIQSIERHTFEP), 937 to 959 (PFLKFINLSCNVITELSFGTFQA), 963 to 987 (MQFLHKLILNHNPLTTVEDPYLFKL), and 1002 to 1027 (LTTLKNILMMTVELEKLILPSHMACC). N-linked (GlcNAc...) asparagine glycosylation occurs at N1079. The LRR 10 repeat unit spans residues 1124 to 1146 (LPYFSAVNLDVKSLLLPFIKLPT). 2 stretches are compositionally biased toward basic and acidic residues: residues 1182–1191 (VGRQSIRREQ) and 1201–1216 (AEEKRLGSPAPREVEQ). Disordered regions lie at residues 1182–1227 (VGRQ…EKLA) and 1309–1328 (KTRSHVTHRTPKVKKSPKVR). Residues 1583–1603 (ILALIVTGILTILIILFCLIV) traverse the membrane as a helical segment. Over 1604–1700 (ICCHRRSLQE…TEEEESEALP (97 aa)) the chain is Cytoplasmic. Residues 1675–1685 (NEDKILNRDPG) show a composition bias toward basic and acidic residues. The tract at residues 1675–1700 (NEDKILNRDPGDSEAPTEEEESEALP) is disordered. Residues 1689 to 1700 (APTEEEESEALP) are compositionally biased toward acidic residues.

This sequence belongs to the LRRC37A family.

It localises to the membrane. The sequence is that of Leucine-rich repeat-containing protein 37A2 (LRRC37A2) from Homo sapiens (Human).